A 180-amino-acid polypeptide reads, in one-letter code: Large ribosomal subunit protein uL6 (180 aa).

It belongs to the universal ribosomal protein uL6 family. Part of the 50S ribosomal subunit.

This protein binds to the 23S rRNA, and is important in its secondary structure. It is located near the subunit interface in the base of the L7/L12 stalk, and near the tRNA binding site of the peptidyltransferase center. The polypeptide is Large ribosomal subunit protein uL6 (Thermus thermophilus (strain ATCC BAA-163 / DSM 7039 / HB27)).